A 90-amino-acid chain; its full sequence is Acylphosphatase (90 aa).

The region spanning 4 to 90 is the Acylphosphatase-like domain; the sequence is TVHLRITGHV…KGQYKDFRIY (87 aa). Active-site residues include Arg19 and Asn37.

This sequence belongs to the acylphosphatase family.

The catalysed reaction is an acyl phosphate + H2O = a carboxylate + phosphate + H(+). The chain is Acylphosphatase (acyP) from Caldanaerobacter subterraneus subsp. tengcongensis (strain DSM 15242 / JCM 11007 / NBRC 100824 / MB4) (Thermoanaerobacter tengcongensis).